Reading from the N-terminus, the 564-residue chain is Threonine--tRNA ligase (564 aa).

The interval 167–464 (DHRAIGKRLE…LLEKTHGNLP (298 aa)) is catalytic. Zn(2+)-binding residues include cysteine 260, histidine 311, and histidine 441.

Belongs to the class-II aminoacyl-tRNA synthetase family. In terms of assembly, homodimer. The cofactor is Zn(2+).

The protein localises to the cytoplasm. The catalysed reaction is tRNA(Thr) + L-threonine + ATP = L-threonyl-tRNA(Thr) + AMP + diphosphate + H(+). Its function is as follows. Catalyzes the attachment of threonine to tRNA(Thr) in a two-step reaction: L-threonine is first activated by ATP to form Thr-AMP and then transferred to the acceptor end of tRNA(Thr). Also edits incorrectly charged L-seryl-tRNA(Thr). The sequence is that of Threonine--tRNA ligase from Mycoplasma pneumoniae (strain ATCC 29342 / M129 / Subtype 1) (Mycoplasmoides pneumoniae).